We begin with the raw amino-acid sequence, 328 residues long: ABC transporter I family member 20 (328 aa).

In terms of domain architecture, ABC transporter spans 14–257 (VEISGLRFTY…SKKSLMRTVE (244 aa)). 55 to 62 (GSNGAGKT) contributes to the ATP binding site. A disordered region spans residues 263 to 295 (ERDEERKRRKERKANGLPEFETRTEESRVTGDP). The span at 282–291 (FETRTEESRV) shows a compositional bias: basic and acidic residues.

It belongs to the ABC transporter superfamily. ABCI family.

The protein localises to the cytoplasm. This Arabidopsis thaliana (Mouse-ear cress) protein is ABC transporter I family member 20 (ABCI20).